Here is a 154-residue protein sequence, read N- to C-terminus: Spore-associated protein A (154 aa).

A signal peptide spans 1 to 33 (MQAVGATLTAVGAIGAGLLVTAPAAGAATAGAT).

It is found in the spore wall. The chain is Spore-associated protein A from Streptomyces coelicolor (strain ATCC BAA-471 / A3(2) / M145).